A 188-amino-acid chain; its full sequence is dCTP deaminase (188 aa).

109 to 114 serves as a coordination point for dCTP; sequence KSTYAR. Catalysis depends on glutamate 135, which acts as the Proton donor/acceptor. DCTP is bound by residues glutamine 154, tyrosine 168, and glutamine 178.

Belongs to the dCTP deaminase family. Homotrimer.

The catalysed reaction is dCTP + H2O + H(+) = dUTP + NH4(+). Its pathway is pyrimidine metabolism; dUMP biosynthesis; dUMP from dCTP (dUTP route): step 1/2. Catalyzes the deamination of dCTP to dUTP. In Helicobacter pylori (strain Shi470), this protein is dCTP deaminase.